We begin with the raw amino-acid sequence, 492 residues long: Probable Xaa-Pro aminopeptidase AO090005001240 (492 aa).

Residues aspartate 272, aspartate 283, glutamate 420, and glutamate 459 each coordinate Mn(2+).

Belongs to the peptidase M24B family. It depends on Mn(2+) as a cofactor.

The enzyme catalyses Release of any N-terminal amino acid, including proline, that is linked to proline, even from a dipeptide or tripeptide.. Functionally, catalyzes the removal of a penultimate prolyl residue from the N-termini of peptides. This is Probable Xaa-Pro aminopeptidase AO090005001240 from Aspergillus oryzae (strain ATCC 42149 / RIB 40) (Yellow koji mold).